A 2122-amino-acid chain; its full sequence is MRMQWFLLRHAYFIKGEDFAVAVALLDLALYVLIGTNSLQFLDQSPEKALFGMITSALIFIIALCGFVIVRMFRTSKYKIETYIMPVLIICNIASVFYMQLINKLVGFMTLQLPVLTFLITGYPYVWLVAFVLIGMGGGLIAQSVVCSVSLGSSCPPSVWVDVGLYALQLISGSVAYFTVYELGILIVRYKRHPARYLDAFSDLTALDTIVFSPVFGLGGETARQVQVNQLMAPEKPNLDGLTFLRSASQVSQTTNRIVSRAFYHANTPPHSSSRDALPADKALGAERSDRAGSAVFSPNTLGPLGAPSAGLRDFGPGRPVPGASVVVPKSLKQHAAALHAGANSPHGSPPLQPHGALPGAPRSNTLRGCSGQVSLVPREEESDPACGSLRASVESKATHRSAATLSACESKSRSGRVAGLFRGLSKRPGGPDCEEAAPAEPATSLGSKELGRKKTAGSKAQSSVPILLPRPQSIEETTWRGLASGDLSKDTPVASLASRRNLRMDEQSGDADKASSDVSRDPAKKGAGPFVAEAPVHTAVLPSSSFHSEFPLSRRDSGKELLSDLRESRERTARAASHDTHAAADDSGLQGDPALAAEARVRTALHYHRRWFFSQLFHFRRARRRHRRGAGARDGELVFERGEPDEVESEESCDDSRSRPRETASLSHFSRLSRSRRHKTRTYRRGRSSDGTTAGTSDSDSHGESLEDEGSDSGQESESEESRRRRMRSSRNRRRETSSEDSSSGTSVRSEGRHCREGRANSSVFSSGIRRYFSFFSAATRCAHAASSEEERPVRPARHSWRRGSGDSRECSASTSGVSEACEHSSDASWASSSSLCGSCEKRSIRMSRRRRREGKSRPHASSVSRAERHRGHVSVDLAPLLPSRLFFDTFLNSVRRAERLSKEGRLPASVSRQSSETRGSRTAFLNGDKGCSPTSEAPERSFPASANEVSFRRNEGWERYYDMLLPSLPPFPSARPLYVKPRKNSQAFQNVAVSVSRNETEMTASSPATSFDGPRAVSLSPEGRGARESSDGGGATAPSDLHSRPARAKSLVAAMLHTYPTCPQPPSDLSLFTTPPASPSSLNEVQASRSSSARITSVELGALGKQQGEAAPAGTDAVEEDRDATEDARGSLSSPTGASRRGDRCRRSWSSCEARSSVEMKPNLSIRDARASESPLQSAAPLLSEEKKSRKAQSCAQCRRCGRSRTRLQPSGRLGSSSREDLVGEADSHVSPEKEVFVSSRREKREEQVPRSRREERRDRRGRRWRRGRRRRKARECSETEERRDSSSEWSGTQYSSQERRSHEAVGGVAQLTPICVDDECGKGDAGLSPLLRSEAEESEGEGDMRERQIYETHSDGDVEELSEEEREDRGRSWLRWLFPWGAGEGQGGEKNRRKRSRSEGRREREFISAERRYLEHHRRSRVSSVADSRWGSGSEASADAYPALRRRKGSRVYPVSKPQWFQPSGLTACSSKNSWLAVPPDISLVSAAPALPTPSPSSLSFSGLDQELDCDANSSTAVSSSLPDSTAWQGSGAAASASSPSLRASVDAHFAEAELHAAEHSDGVSVSPRNSPGALSARPMSAAGMPNPDSGIATQTPQTPQTPHTQRPLLLAQSLVAASGKPLPPTRADFEAQRSQGLGDLSQKTPRVFSPQGLGRSQGYGPGGSSYALDSSREAGPSGRLSATPSTRLQGSGGPAFPHSSFPQAIGAAGTPTAPSRDSRTFFGDTGAARASRAGLSGRLASRGTALAPKGTRRLKSGYSVGAADAKDKQKGKVLRYQLVQKFHDRLPWWVARIIVYTDAALENCRRRRRLMQRATWKTKVAMPVRNMLGLFSDEKIETWYVQWLNAFNAKYYPRVAWLLFLICFYATAFHGLLRLRGFIENYPLCIDAVRASPLGEAGFLILVAVRFASQPILSFLLLLPLLRHSGSRLIDFLFCSRAPATPLKSYKLYRWMLALSFLQFVYAVFDNTWHLIAEPGSRHVNPLTIIPASPSLEIAAVQTVYILAVRTPTINLIFLLYIITYIIIFFVALPPGVQQVQLFTISMAGWLFTCVGGQLFYTRAFEVNRRRLFCKYVLPYMLYLEEIAAILYSNPQGEYPLDEGSEDEVSMGSGHLVGDRSA.

The next 5 membrane-spanning stretches (helical) occupy residues 19 to 39, 50 to 70, 82 to 102, 115 to 135, and 145 to 165; these read FAVA…TNSL, LFGM…FVIV, TYIM…MQLI, VLTF…VLIG, and VVCS…DVGL. Disordered regions lie at residues 337-403, 422-532, 565-591, 627-762, 785-815, 848-870, 903-949, 999-1046, 1068-1308, 1328-1368, 1515-1540, 1560-1608, and 1639-1727; these read AALH…HRSA, FRGL…GPFV, DLRE…SGLQ, HRRG…GRAN, HAAS…CSAS, MSRR…RAER, SKEG…ASAN, RNET…LHSR, PSDL…HEAV, AGLS…SEEE, ANSS…AASA, AAEH…TPHT, and QGLG…TFFG. The span at 363–374 shows a compositional bias: polar residues; the sequence is RSNTLRGCSGQV. Composition is skewed to basic and acidic residues over residues 503–525, 565–585, and 632–645; these read LRMD…DPAK, DLRE…HAAA, and GARD…RGEP. The segment covering 672–687 has biased composition (basic residues); sequence RLSRSRRHKTRTYRRG. A compositionally biased stretch (low complexity) spans 690–699; it reads SDGTTAGTSD. Acidic residues predominate over residues 707 to 720; the sequence is LEDEGSDSGQESES. The span at 725 to 735 shows a compositional bias: basic residues; that stretch reads RRRMRSSRNRR. Residues 741–750 show a composition bias toward low complexity; that stretch reads EDSSSGTSVR. The segment covering 751-760 has biased composition (basic and acidic residues); it reads SEGRHCREGR. Residue N762 is glycosylated (N-linked (GlcNAc...) asparagine). Positions 848 to 860 are enriched in basic residues; sequence MSRRRRREGKSRP. 2 stretches are compositionally biased toward polar residues: residues 999-1011 and 1072-1097; these read RNET…SPAT and SLFT…SARI. N1000 is a glycosylation site (N-linked (GlcNAc...) asparagine). An N-linked (GlcNAc...) asparagine glycan is attached at N1165. Residues 1220-1261 show a composition bias toward basic and acidic residues; that stretch reads SREDLVGEADSHVSPEKEVFVSSRREKREEQVPRSRREERRD. Residues 1262 to 1276 show a composition bias toward basic residues; the sequence is RRGRRWRRGRRRRKA. 2 stretches are compositionally biased toward basic and acidic residues: residues 1277-1289 and 1345-1359; these read RECS…RDSS and GDMR…HSDG. Residues 1515-1527 are compositionally biased toward polar residues; it reads ANSSTAVSSSLPD. N-linked (GlcNAc...) asparagine glycosylation is present at N1516. Composition is skewed to low complexity over residues 1528 to 1540 and 1597 to 1608; these read STAW…AASA and TQTPQTPQTPHT. Over residues 1684–1693 the composition is skewed to polar residues; sequence LSATPSTRLQ. The next 5 helical transmembrane spans lie at 1859–1879, 1956–1976, 1989–2009, 2017–2037, and 2040–2060; these read VAWL…LLRL, MLAL…WHLI, IIPA…ILAV, IFLL…PPGV, and VQLF…GQLF. A disordered region spans residues 2102 to 2122; that stretch reads DEGSEDEVSMGSGHLVGDRSA.

Interacts with guanylate cyclase GC; the interaction regulates guanylate cyclase GC trafficking and catalytic activity.

It localises to the cell membrane. Its function is as follows. In tachyzoites, required for the cellular trafficking of guanylate cyclase GC to the cell membrane and for GC guanylate cyclase activity. The protein is Unique GC organizer UGO of Toxoplasma gondii (strain ATCC 50853 / GT1).